The following is a 205-amino-acid chain: UPF0056 membrane protein MJ1677 (205 aa).

Transmembrane regions (helical) follow at residues Ile7–Ile27, Ala49–Ile69, Ser70–Val90, Ile112–Met132, Phe145–Ala165, and Gly185–Leu205.

It belongs to the UPF0056 (MarC) family.

It localises to the cell membrane. The polypeptide is UPF0056 membrane protein MJ1677 (Methanocaldococcus jannaschii (strain ATCC 43067 / DSM 2661 / JAL-1 / JCM 10045 / NBRC 100440) (Methanococcus jannaschii)).